A 1588-amino-acid polypeptide reads, in one-letter code: Pentafunctional AROM polypeptide (1588 aa).

Residues 1 to 392 (MVQLAKVPIL…YGDSAQFVSD (392 aa)) are 3-dehydroquinate synthase. Residues 43–45 (DTN), 78–81 (ETSK), 109–111 (GGV), and aspartate 114 each bind NAD(+). Arginine 125 lines the 7-phospho-2-dehydro-3-deoxy-D-arabino-heptonate pocket. Position 134 to 135 (134 to 135 (TS)) interacts with NAD(+). The 7-phospho-2-dehydro-3-deoxy-D-arabino-heptonate site is built by aspartate 141 and lysine 147. Lysine 156 contacts NAD(+). Asparagine 157 lines the 7-phospho-2-dehydro-3-deoxy-D-arabino-heptonate pocket. NAD(+) contacts are provided by residues 174–177 (WLET) and asparagine 185. Residue glutamate 189 coordinates Zn(2+). 7-phospho-2-dehydro-3-deoxy-D-arabino-heptonate-binding positions include 189–192 (EVIK) and lysine 258. The active-site Proton acceptor; for 3-dehydroquinate synthase activity is the glutamate 268. 7-phospho-2-dehydro-3-deoxy-D-arabino-heptonate-binding positions include 272–276 (RNLLN) and histidine 279. Histidine 279 is a binding site for Zn(2+). Histidine 283 serves as the catalytic Proton acceptor; for 3-dehydroquinate synthase activity. 7-phospho-2-dehydro-3-deoxy-D-arabino-heptonate contacts are provided by histidine 295 and lysine 364. Histidine 295 serves as a coordination point for Zn(2+). The tract at residues 405–871 (VYPFKDIPAD…WDVLHSELGA (467 aa)) is EPSP synthase. Cysteine 853 acts as the For EPSP synthase activity in catalysis. Residues 890–1080 (SVVIIGMRAA…IPSGRSAFVC (191 aa)) form a shikimate kinase region. 895-902 (GMRAAGKT) provides a ligand contact to ATP. Residues 1081-1293 (LTFDDLTEQT…AAPGQLTVAQ (213 aa)) are 3-dehydroquinase. Histidine 1198 serves as the catalytic Proton acceptor; for 3-dehydroquinate dehydratase activity. Lysine 1227 functions as the Schiff-base intermediate with substrate; for 3-dehydroquinate dehydratase activity in the catalytic mechanism. The tract at residues 1306–1588 (PKELFVVGKP…KAIFDAVTKE (283 aa)) is shikimate dehydrogenase.

This sequence in the N-terminal section; belongs to the sugar phosphate cyclases superfamily. Dehydroquinate synthase family. The protein in the 2nd section; belongs to the EPSP synthase family. It in the 3rd section; belongs to the shikimate kinase family. In the 4th section; belongs to the type-I 3-dehydroquinase family. This sequence in the C-terminal section; belongs to the shikimate dehydrogenase family. As to quaternary structure, homodimer. The cofactor is Zn(2+).

Its subcellular location is the cytoplasm. The catalysed reaction is 7-phospho-2-dehydro-3-deoxy-D-arabino-heptonate = 3-dehydroquinate + phosphate. It catalyses the reaction 3-dehydroquinate = 3-dehydroshikimate + H2O. It carries out the reaction shikimate + NADP(+) = 3-dehydroshikimate + NADPH + H(+). The enzyme catalyses shikimate + ATP = 3-phosphoshikimate + ADP + H(+). The catalysed reaction is 3-phosphoshikimate + phosphoenolpyruvate = 5-O-(1-carboxyvinyl)-3-phosphoshikimate + phosphate. Its pathway is metabolic intermediate biosynthesis; chorismate biosynthesis; chorismate from D-erythrose 4-phosphate and phosphoenolpyruvate: step 2/7. It participates in metabolic intermediate biosynthesis; chorismate biosynthesis; chorismate from D-erythrose 4-phosphate and phosphoenolpyruvate: step 3/7. The protein operates within metabolic intermediate biosynthesis; chorismate biosynthesis; chorismate from D-erythrose 4-phosphate and phosphoenolpyruvate: step 4/7. It functions in the pathway metabolic intermediate biosynthesis; chorismate biosynthesis; chorismate from D-erythrose 4-phosphate and phosphoenolpyruvate: step 5/7. Its pathway is metabolic intermediate biosynthesis; chorismate biosynthesis; chorismate from D-erythrose 4-phosphate and phosphoenolpyruvate: step 6/7. The AROM polypeptide catalyzes 5 consecutive enzymatic reactions in prechorismate polyaromatic amino acid biosynthesis. This is Pentafunctional AROM polypeptide from Saccharomyces cerevisiae (strain Lalvin EC1118 / Prise de mousse) (Baker's yeast).